Here is a 99-residue protein sequence, read N- to C-terminus: Co-chaperonin GroES (99 aa).

Belongs to the GroES chaperonin family. Heptamer of 7 subunits arranged in a ring. Interacts with the chaperonin GroEL.

Its subcellular location is the cytoplasm. Its function is as follows. Together with the chaperonin GroEL, plays an essential role in assisting protein folding. The GroEL-GroES system forms a nano-cage that allows encapsulation of the non-native substrate proteins and provides a physical environment optimized to promote and accelerate protein folding. GroES binds to the apical surface of the GroEL ring, thereby capping the opening of the GroEL channel. This chain is Co-chaperonin GroES, found in Corynebacterium jeikeium (strain K411).